Reading from the N-terminus, the 206-residue chain is Small ribosomal subunit protein uS4 (206 aa).

The 61-residue stretch at 96-156 folds into the S4 RNA-binding domain; it reads GRLDNVVYRM…EKAKKQSRVK (61 aa).

The protein belongs to the universal ribosomal protein uS4 family. In terms of assembly, part of the 30S ribosomal subunit. Contacts protein S5. The interaction surface between S4 and S5 is involved in control of translational fidelity.

Its function is as follows. One of the primary rRNA binding proteins, it binds directly to 16S rRNA where it nucleates assembly of the body of the 30S subunit. With S5 and S12 plays an important role in translational accuracy. In Cronobacter sakazakii (strain ATCC BAA-894) (Enterobacter sakazakii), this protein is Small ribosomal subunit protein uS4.